The sequence spans 378 residues: GTPase Obg (378 aa).

The 159-residue stretch at 1 to 159 (MKFVDEATIE…RRLRLELKVL (159 aa)) folds into the Obg domain. An OBG-type G domain is found at 160–336 (ADVGLLGLPN…LIWALQDYLD (177 aa)). GTP contacts are provided by residues 166–173 (GLPNAGKS), 191–195 (FTTLH), 213–216 (DIPG), 288–291 (NKLD), and 317–319 (SGL). The Mg(2+) site is built by Ser173 and Thr193. The disordered stretch occupies residues 345-378 (AQDQADGTYVAEDPRFDATRSDAAPPGAPRGGDE).

This sequence belongs to the TRAFAC class OBG-HflX-like GTPase superfamily. OBG GTPase family. As to quaternary structure, monomer. The cofactor is Mg(2+).

Its subcellular location is the cytoplasm. In terms of biological role, an essential GTPase which binds GTP, GDP and possibly (p)ppGpp with moderate affinity, with high nucleotide exchange rates and a fairly low GTP hydrolysis rate. Plays a role in control of the cell cycle, stress response, ribosome biogenesis and in those bacteria that undergo differentiation, in morphogenesis control. This chain is GTPase Obg, found in Bordetella petrii (strain ATCC BAA-461 / DSM 12804 / CCUG 43448).